The sequence spans 369 residues: C-C chemokine receptor type 9 (369 aa).

The Extracellular portion of the chain corresponds to 1–48 (MMPTELTSLIPGMFDDFSYDSTASTDDYMNLNFSSFFCKKNNVRQFAS). Asparagine 32 is a glycosylation site (N-linked (GlcNAc...) asparagine). 2 disulfide bridges follow: cysteine 38/cysteine 289 and cysteine 119/cysteine 198. The helical transmembrane segment at 49–74 (HFLPPLYWLVFIVGTLGNSLVILVYW) threads the bilayer. At 75 to 85 (YCTRVKTMTDM) the chain is on the cytoplasmic side. A helical transmembrane segment spans residues 86–109 (FLLNLAIADLLFLATLPFWAIAAA). Over 110-120 (GQWMFQTFMCK) the chain is Extracellular. Residues 121 to 150 (VVNSMYKMNFYSCVLLIMCISVDRYIAIVQ) traverse the membrane as a helical segment. Residues 151–159 (AMKAQVWRQ) lie on the Cytoplasmic side of the membrane. Residues 160-185 (KRLLYSKMVCITIWVMAAVLCTPEIL) traverse the membrane as a helical segment. At 186 to 208 (YSQVSGESGIATCTMVYPKDKNA) the chain is on the extracellular side. Residues 209–243 (KLKSAVLILKVTLGFFLPFMVMAFCYTIIIHTLVQ) traverse the membrane as a helical segment. The Cytoplasmic segment spans residues 244-248 (AKKSS). A helical transmembrane segment spans residues 249 to 283 (KHKALKVTITVLTVFIMSQFPYNSILVVQAVDAYA). The Extracellular portion of the chain corresponds to 284-290 (MFISNCT). Residues 291 to 321 (ISTNIDICFQVTQTIAFFHSCLNPVLYVFVG) form a helical membrane-spanning segment. Residues 322–369 (ERFRRDLVKTLKNLGCISQAQWVSFTRREGSLKLSSMLLETTSGALSL) are Cytoplasmic-facing.

The protein belongs to the G-protein coupled receptor 1 family. In terms of tissue distribution, highly expressed in the thymus and low in lymph nodes and spleen.

The protein localises to the cell membrane. In terms of biological role, receptor for chemokine SCYA25/TECK. Subsequently transduces a signal by increasing the intracellular calcium ions level. This chain is C-C chemokine receptor type 9 (Ccr9), found in Mus musculus (Mouse).